Here is a 247-residue protein sequence, read N- to C-terminus: uncharacterized protein (247 aa).

The NADP(+) site is built by Leu-11, Asn-85, and Lys-119. Ser-136 acts as the Proton donor in catalysis. NADP(+)-binding residues include Tyr-150, Lys-154, Val-181, and Thr-183. Tyr-150 serves as the catalytic Proton acceptor. The active-site Lowers pKa of active site Tyr is Lys-154.

This sequence belongs to the short-chain dehydrogenases/reductases (SDR) family.

This is an uncharacterized protein from Schizosaccharomyces pombe (strain 972 / ATCC 24843) (Fission yeast).